A 312-amino-acid polypeptide reads, in one-letter code: HTH-type transcriptional regulator TdcA (312 aa).

Residues 7–64 enclose the HTH lysR-type domain; it reads PKTQHLVVFQEVIRSGSIGSAAKELGLTQPAVSKIINDIEDYFGVELVVRKNTGVTLT. A DNA-binding region (H-T-H motif) is located at residues 24–43; that stretch reads IGSAAKELGLTQPAVSKIIN.

The protein belongs to the LysR transcriptional regulatory family.

The protein operates within amino-acid degradation; L-threonine degradation via propanoate pathway [regulation]. Functionally, transcriptional activator for the tdcABCDE operon. This Escherichia coli O157:H7 protein is HTH-type transcriptional regulator TdcA (tdcA).